The chain runs to 1151 residues: MALRLVLGRAGSGKTRLCLEEIKAILAEGPAGPALIILTPEQATLQMELDLHRAAGVPGFSRVQVLSFRRLGWRVFQEAGGAARPHLGEMGKAMALRAVVSAHRDDLGLFAPLAGSPGFIEQLAHTIAELKLYRVTPADLDRILERYRETGREQTILARKLRDLALVYRELETYLAGRYLDPDDYLTLLAGRLPEAAFIRGARVWVDGFNGFTPQEEAVLQALMAVAEQVTVTLCLDPTLRHRRLGETELFHPTGETYHRLRQLALAAGVRVEDDVCLAGTPPRFREAPALAHLEAHFGRWPLRPFRGDAAGIRLVAAANRRVEVEAAAREILRLAREENLSWRQMAVLVRDLEPYHDLIVNTFRDFNIPLFIDRRRPVGHHPLVELVRAALEAVLEDWAYDPVFRYLKSDLVPVPREEIDLLENYVLAHGIRGRRWRDSRPWQYGNSRDLETPSPPGSAAGETINAIRERASCHLRRFDGALRGRQLTGREITAALFDLLQELGVPERLAAWSRQAAAAGDLDAAQEHEQIWEGLMDLLEELVLALGDTSLELEEYAAILDTGLESLKLRLIPPALDQVVAGTLDRSRQPELQAAFVLGVGEGVLPARLPEDATFSDREREELRAAGLELAPTGTLRLFHEEFLAYLALTRSRRYLWLSYPLADAEGKALSPSPLVRRLRQLLPGLREETAGTELPGGDDDLVYLTTPRQAAGHLARLLGRGRPLPPLWQEVYRWLHQDARGQKMLGLLEGGGYRNQVDPLEPELARGLYPRPLRLSISQLETFAGCPFRYFLSYGLGLQERRLYQVDPAGMGQFYHAALKLFVEELGRRGLDWGRLSDNEAAAIISQVVDSLAPALQHEILSSSARYGYLRKKLEQTLQRVMEVLNEHARRGEFRPLAVETSFGCRGKLPPLQLDAGPGRRVFLEGRVDRIDVARRQGRPYLRVIDYKSSPTTLDLTAVYYGLALQLPLYLRAALDAAPELLGEAAEPAGMLYFAVRNPLIRQRGPVGKEAAARLRRQELKMRGLLLDDVEVIKLMDREIAASPDLLPLRLNKDGSLRKGAPVAGREEMALLLDLALARAAELAGAILSGRVEISPYRRGQETACDFCPYRPVCAFDPQIPGSGYRRLGNLPGDFWQLAAAFLGSQMKG.

Residues 1–273 (MALRLVLGRA…LALAAGVRVE (273 aa)) form the UvrD-like helicase ATP-binding domain. Residue 8–15 (GRAGSGKT) coordinates ATP. The region spanning 282–578 (PPRFREAPAL…KLRLIPPALD (297 aa)) is the UvrD-like helicase C-terminal domain. Positions 788, 1107, 1110, and 1116 each coordinate [4Fe-4S] cluster.

The protein belongs to the helicase family. AddB/RexB type 1 subfamily. Heterodimer of AddA and AddB. It depends on Mg(2+) as a cofactor. The cofactor is [4Fe-4S] cluster.

Functionally, the heterodimer acts as both an ATP-dependent DNA helicase and an ATP-dependent, dual-direction single-stranded exonuclease. Recognizes the chi site generating a DNA molecule suitable for the initiation of homologous recombination. The AddB subunit has 5' -&gt; 3' nuclease activity but not helicase activity. The polypeptide is ATP-dependent helicase/deoxyribonuclease subunit B (Moorella thermoacetica (strain ATCC 39073 / JCM 9320)).